The chain runs to 375 residues: Chaperone protein DnaJ (375 aa).

The J domain maps to 5–70 (DYYEILGISK…EKRAAYDQYG (66 aa)). The segment at 130 to 208 (GIIKEICIPT…CHGNGRVERS (79 aa)) adopts a CR-type zinc-finger fold. Residues Cys143, Cys146, Cys160, Cys163, Cys182, Cys185, Cys196, and Cys199 each contribute to the Zn(2+) site. CXXCXGXG motif repeat units follow at residues 143-150 (CEKCRGTG), 160-167 (CMTCHGQG), 182-189 (CPTCHGHG), and 196-203 (CNKCHGNG).

This sequence belongs to the DnaJ family. In terms of assembly, homodimer. It depends on Zn(2+) as a cofactor.

The protein resides in the cytoplasm. In terms of biological role, participates actively in the response to hyperosmotic and heat shock by preventing the aggregation of stress-denatured proteins and by disaggregating proteins, also in an autonomous, DnaK-independent fashion. Unfolded proteins bind initially to DnaJ; upon interaction with the DnaJ-bound protein, DnaK hydrolyzes its bound ATP, resulting in the formation of a stable complex. GrpE releases ADP from DnaK; ATP binding to DnaK triggers the release of the substrate protein, thus completing the reaction cycle. Several rounds of ATP-dependent interactions between DnaJ, DnaK and GrpE are required for fully efficient folding. Also involved, together with DnaK and GrpE, in the DNA replication of plasmids through activation of initiation proteins. The protein is Chaperone protein DnaJ of Blochmanniella pennsylvanica (strain BPEN).